The primary structure comprises 275 residues: Undecaprenyl-diphosphatase (275 aa).

The next 8 membrane-spanning stretches (helical) occupy residues I4 to P24, L54 to L74, L92 to Y112, Y123 to D143, I154 to F174, A194 to L214, M228 to W248, and S255 to I275.

The protein belongs to the UppP family.

It is found in the cell membrane. It catalyses the reaction di-trans,octa-cis-undecaprenyl diphosphate + H2O = di-trans,octa-cis-undecaprenyl phosphate + phosphate + H(+). Catalyzes the dephosphorylation of undecaprenyl diphosphate (UPP). Confers resistance to bacitracin. The protein is Undecaprenyl-diphosphatase of Baumannia cicadellinicola subsp. Homalodisca coagulata.